A 34-amino-acid polypeptide reads, in one-letter code: Tryptophanase operon leader peptide (34 aa).

The protein is Tryptophanase operon leader peptide (tnaL) of Proteus vulgaris.